The following is a 408-amino-acid chain: uncharacterized protein (408 aa).

This sequence belongs to the protein kinase superfamily. ADCK protein kinase family.

This is an uncharacterized protein from Synechocystis sp. (strain ATCC 27184 / PCC 6803 / Kazusa).